A 317-amino-acid chain; its full sequence is Acetyl-coenzyme A carboxylase carboxyl transferase subunit alpha (317 aa).

In terms of domain architecture, CoA carboxyltransferase C-terminal spans 40–293 (LEVRVREAIV…GDVIASALAE (254 aa)).

Belongs to the AccA family. Acetyl-CoA carboxylase is a heterohexamer composed of biotin carboxyl carrier protein (AccB), biotin carboxylase (AccC) and two subunits each of ACCase subunit alpha (AccA) and ACCase subunit beta (AccD).

The protein localises to the cytoplasm. The enzyme catalyses N(6)-carboxybiotinyl-L-lysyl-[protein] + acetyl-CoA = N(6)-biotinyl-L-lysyl-[protein] + malonyl-CoA. Its pathway is lipid metabolism; malonyl-CoA biosynthesis; malonyl-CoA from acetyl-CoA: step 1/1. Functionally, component of the acetyl coenzyme A carboxylase (ACC) complex. First, biotin carboxylase catalyzes the carboxylation of biotin on its carrier protein (BCCP) and then the CO(2) group is transferred by the carboxyltransferase to acetyl-CoA to form malonyl-CoA. The sequence is that of Acetyl-coenzyme A carboxylase carboxyl transferase subunit alpha from Rhizobium johnstonii (strain DSM 114642 / LMG 32736 / 3841) (Rhizobium leguminosarum bv. viciae).